Here is a 323-residue protein sequence, read N- to C-terminus: MSRTALIENITAMLEDADFLVSDRCAVRPKSFDVAARRDEDLVLLKILGNVDALDAETGAEMRRLGEYLQATPMVIGIRTRDEELKPGVVYFRHGVPVINPDTGYDLFVEGMPPLIYAAPGGLYVSLDGDLLADEREERGWSLGRLATELGVSRRTVSKYEDGMNASIEVAIQLEDLFNEPFSSPVDVLDGAGEVRDADPTPSAPETDPDDEHVLHVLTNAGFTVHPTARAPFKAVSEDEGSSPARVLTGHSTFTPAAEKRARIMSSIGEVARTRSVYFTEENEDRESVDGTALVSCEELADISDPEGIRELIRDRAKAPSEA.

One can recognise an HTH cro/C1-type domain in the interval 132–189 (LADEREERGWSLGRLATELGVSRRTVSKYEDGMNASIEVAIQLEDLFNEPFSSPVDVL). The H-T-H motif DNA-binding region spans 143–162 (LGRLATELGVSRRTVSKYED). The disordered stretch occupies residues 188 to 211 (VLDGAGEVRDADPTPSAPETDPDD).

This is Putative HTH-type transcriptional regulatory protein Hlac_0273 from Halorubrum lacusprofundi (strain ATCC 49239 / DSM 5036 / JCM 8891 / ACAM 34).